Consider the following 169-residue polypeptide: NADH-quinone oxidoreductase subunit I (169 aa).

2 consecutive 4Fe-4S ferredoxin-type domains span residues 61–90 (RRYD…IESE) and 100–129 (TRYD…ETHI). [4Fe-4S] cluster is bound by residues C70, C73, C76, C80, C109, C112, C115, and C119.

Belongs to the complex I 23 kDa subunit family. NDH-1 is composed of 14 different subunits. Subunits NuoA, H, J, K, L, M, N constitute the membrane sector of the complex. [4Fe-4S] cluster is required as a cofactor.

The protein localises to the cell inner membrane. The catalysed reaction is a quinone + NADH + 5 H(+)(in) = a quinol + NAD(+) + 4 H(+)(out). In terms of biological role, NDH-1 shuttles electrons from NADH, via FMN and iron-sulfur (Fe-S) centers, to quinones in the respiratory chain. The immediate electron acceptor for the enzyme in this species is believed to be ubiquinone. Couples the redox reaction to proton translocation (for every two electrons transferred, four hydrogen ions are translocated across the cytoplasmic membrane), and thus conserves the redox energy in a proton gradient. The protein is NADH-quinone oxidoreductase subunit I of Verminephrobacter eiseniae (strain EF01-2).